Reading from the N-terminus, the 339-residue chain is tRNA N6-adenosine threonylcarbamoyltransferase (339 aa).

2 residues coordinate Fe cation: histidine 111 and histidine 115. Substrate-binding positions include 139–143 (LVSGG), aspartate 172, glycine 185, aspartate 189, and asparagine 280. Aspartate 308 is a binding site for Fe cation.

Belongs to the KAE1 / TsaD family. It depends on Fe(2+) as a cofactor.

Its subcellular location is the cytoplasm. It carries out the reaction L-threonylcarbamoyladenylate + adenosine(37) in tRNA = N(6)-L-threonylcarbamoyladenosine(37) in tRNA + AMP + H(+). Required for the formation of a threonylcarbamoyl group on adenosine at position 37 (t(6)A37) in tRNAs that read codons beginning with adenine. Is involved in the transfer of the threonylcarbamoyl moiety of threonylcarbamoyl-AMP (TC-AMP) to the N6 group of A37, together with TsaE and TsaB. TsaD likely plays a direct catalytic role in this reaction. This Bacteroides thetaiotaomicron (strain ATCC 29148 / DSM 2079 / JCM 5827 / CCUG 10774 / NCTC 10582 / VPI-5482 / E50) protein is tRNA N6-adenosine threonylcarbamoyltransferase.